A 277-amino-acid polypeptide reads, in one-letter code: Protein OPG166 (277 aa).

N-linked (GlcNAc...) asparagine; by host glycosylation is found at Asn29 and Asn58. The next 5 helical transmembrane spans lie at 124 to 144, 156 to 176, 186 to 206, 219 to 239, and 247 to 267; these read TMLMFIFTGITLFLLFLEIAY, GILQVFGCIIAMIELCGAFLF, IIGLLMMTLPSIFLIITKVFS, LIIYYQLAGYILTVLGLGLSL, and LLLSGLGTIMVSEHFSLLFLV.

It belongs to the orthopoxvirus OPG166 protein family.

Its subcellular location is the host membrane. Functionally, promotes, when overexpressed, the influx of extracellular Ca(2+), leading to membrane permeability and host cell necrosis. The sequence is that of Protein OPG166 (OPG166) from Variola virus (isolate Human/India/Ind3/1967) (VARV).